The sequence spans 515 residues: Maturase K (515 aa).

It belongs to the intron maturase 2 family. MatK subfamily.

Its subcellular location is the plastid. The protein resides in the chloroplast. Its function is as follows. Usually encoded in the trnK tRNA gene intron. Probably assists in splicing its own and other chloroplast group II introns. In Helonias bullata (Swamp pink), this protein is Maturase K.